A 144-amino-acid chain; its full sequence is Large ribosomal subunit protein uL16 (144 aa).

Residues 1-19 (MLLPKRVKYRRQHRPKTTG) show a composition bias toward basic residues. Residues 1–26 (MLLPKRVKYRRQHRPKTTGRSKGGNE) are disordered.

It belongs to the universal ribosomal protein uL16 family. Part of the 50S ribosomal subunit.

Functionally, binds 23S rRNA and is also seen to make contacts with the A and possibly P site tRNAs. This Macrococcus caseolyticus (strain JCSC5402) (Macrococcoides caseolyticum) protein is Large ribosomal subunit protein uL16.